The chain runs to 842 residues: MNNTTEYIDALPLTDIEKAALPKSDIRAVHTALDGEHHPFSRDDDTPLGSVKARLEQAWPDSLAEGQLIKDDEGRTQLQAMPKATRSSMFPDPWRTNPVGRFWDRLRGREVAPRYLSRLTKEQQASEQKWRTVGTIRRYTLLLLTLAQTVVATWYMKTILPYQGWALINPADMFGQDVWVSFMQLLPYILQSGILLLFAVLFCWVSAGFWTALMGFLQLLMGRDKYSISASTVGDEALNPEHRTALIMPICNEDVDRVFAGLRATWESVKATGNAAHFDVYILSDSYNPDICVAEQKAWMELIAEVQGEGQIFYRRRRRRVKRKSGNIDDFCRRWGNQYSYMVVLDADSVMTGECLTGLVRLMEANPNAGIIQSSPKASGMDTLYARCQQFATRVYGPLFTAGLHFWQLGESHYWGHNAIIRVQPFIEHCALAPLPGEGSFAGSILSHDFVEAALMRRAGWGVWIAYDLPGSYEELPPNLLDELKRDRRWCHGNLMNFRLFLVKGMHPVHRAVFLTGVMSYLSAPLWFMFLALSTALQVVHALTEPQYFLQPRQLFPVWPQWRPELAIALFASTMILLFLPKLLSIILIWCKGSKEYGGFCRVTLSLLLEVLFSVLLAPVRMLFHTVFVVSAFLGWEVVWNSPQRDDDSTPWSEAFKRHGSQMLLGLVWAAGMAWLDLRFLFWLAPIVFSLILSPFVSVISSRSTMGLRTKRWKLFLIPEEYSPPQVLVDTDKYLVLNRSRSLDDGFIHAVFNPSFNALATAMATARHRASQVLEIARDRHVEQALNETPEKLNRDRRLVLLSDPITMARLHYRVWSAPERYSSWVNYYSTIKLNPLAIKSK.

The next 6 membrane-spanning stretches (helical) occupy residues leucine 141 to proline 161, isoleucine 194 to methionine 214, valine 513 to leucine 533, leucine 570 to tryptophan 590, valine 615 to glycine 635, and phenylalanine 680 to isoleucine 700.

The protein belongs to the glycosyltransferase 2 family. OpgH subfamily.

Its subcellular location is the cell inner membrane. It functions in the pathway glycan metabolism; osmoregulated periplasmic glucan (OPG) biosynthesis. Its function is as follows. Involved in the biosynthesis of osmoregulated periplasmic glucans (OPGs). This is Glucans biosynthesis glucosyltransferase H from Enterobacter sp. (strain 638).